Reading from the N-terminus, the 300-residue chain is L-threonine kinase (300 aa).

Position 92 to 102 (92 to 102 (PVAKGMASSTA)) interacts with ATP.

This sequence belongs to the GHMP kinase family. PduX subfamily.

The protein resides in the cytoplasm. It catalyses the reaction L-threonine + ATP = O-phospho-L-threonine + ADP + H(+). It functions in the pathway cofactor biosynthesis; adenosylcobalamin biosynthesis. It participates in polyol metabolism; 1,2-propanediol degradation. L-threonine kinase that catalyzes the conversion of L-threonine to L-threonine-O-3-phosphate. Involved in the de novo synthesis of adenosylcobalamin (coenzyme B12) and the assimilation of cobyric acid. Uses ATP; the activity with CTP, GTP or UTP is 6, 11, and 3% of the activity with ATP, respectively. In terms of biological role, the 1,2-propanediol (1,2-PD)-specific bacterial microcompartment (BMC) concentrates low levels of 1,2-PD catabolic enzymes, concentrates volatile reaction intermediates thus enhancing pathway flux and keeps the level of toxic, mutagenic propionaldehyde low. This gene probably benefits from its induction via the Pdu promoter, rather than a physical interaction with the BMC. This Salmonella typhimurium (strain LT2 / SGSC1412 / ATCC 700720) protein is L-threonine kinase.